Reading from the N-terminus, the 202-residue chain is Endothelin-1 (202 aa).

The signal sequence occupies residues 1-23 (MDYFSMMVSLLLVAFHGAPETAA). The segment at 24-49 (SGTELSTGAENPGEKPPASAPWRPRR) is disordered. A propeptide spanning residues 24–50 (SGTELSTGAENPGEKPPASAPWRPRRS) is cleaved from the precursor. 2 disulfides stabilise this stretch: Cys53–Cys67 and Cys55–Cys63. Residues 74 to 202 (VNTPGHIVPY…EQKVTHNRTH (129 aa)) constitute a propeptide that is removed on maturation. Residues 110 to 124 (CQCTSPHDKKCWNFC) form an endothelin-like region.

This sequence belongs to the endothelin/sarafotoxin family.

It is found in the secreted. Functionally, endothelins are endothelium-derived vasoconstrictor peptides. Probable ligand for G-protein coupled receptors EDNRA and EDNRB which activates PTK2B, BCAR1, BCAR3 and, GTPases RAP1 and RHOA cascade in glomerular mesangial cells. Also binds the DEAR/FBXW7-AS1 receptor. Promotes mesenteric arterial wall remodeling via activation of ROCK signaling and subsequent colocalization of NFATC3 with F-actin filaments. NFATC3 then translocates to the nucleus where it subsequently promotes the transcription of the smooth muscle hypertrophy and differentiation marker ACTA2. This chain is Endothelin-1 (EDN1), found in Oryctolagus cuniculus (Rabbit).